The following is a 515-amino-acid chain: 1-pyrroline-5-carboxylate dehydrogenase (515 aa).

Active-site residues include Glu286 and Cys320.

This sequence belongs to the aldehyde dehydrogenase family. RocA subfamily.

The enzyme catalyses L-glutamate 5-semialdehyde + NAD(+) + H2O = L-glutamate + NADH + 2 H(+). Its pathway is amino-acid degradation; L-proline degradation into L-glutamate; L-glutamate from L-proline: step 2/2. The protein is 1-pyrroline-5-carboxylate dehydrogenase of Geobacillus thermodenitrificans (strain NG80-2).